The chain runs to 120 residues: Flagellar protein FliT (120 aa).

The tract at residues 1-50 (MERHQHLLSEYQQILTLSEQMLVLATEGNWDALVDLEMTYLKAVESTANI) is required for homodimerization. A fliD binding region spans residues 60 to 98 (LQDLLREKLRAILDNEIEIKRLLQLRLDRLSDLVGQSTK).

The protein belongs to the FliT family. In terms of assembly, homodimer. Interacts with FliD and FlhC.

The protein localises to the cytoplasm. It is found in the cytosol. Its function is as follows. Dual-function protein that regulates the transcription of class 2 flagellar operons and that also acts as an export chaperone for the filament-capping protein FliD. As a transcriptional regulator, acts as an anti-FlhDC factor; it directly binds FlhC, thus inhibiting the binding of the FlhC/FlhD complex to class 2 promoters, resulting in decreased expression of class 2 flagellar operons. As a chaperone, effects FliD transition to the membrane by preventing its premature polymerization, and by directing it to the export apparatus. The sequence is that of Flagellar protein FliT from Yersinia enterocolitica serotype O:8 / biotype 1B (strain NCTC 13174 / 8081).